Here is a 611-residue protein sequence, read N- to C-terminus: DNA mismatch repair protein MutL (611 aa).

Residues 353-387 (NRQAAGGNHFATPAPAAAPRPASTASSSWQRQEPV) form a disordered region. Over residues 363-380 (ATPAPAAAPRPASTASSS) the composition is skewed to low complexity.

Belongs to the DNA mismatch repair MutL/HexB family.

In terms of biological role, this protein is involved in the repair of mismatches in DNA. It is required for dam-dependent methyl-directed DNA mismatch repair. May act as a 'molecular matchmaker', a protein that promotes the formation of a stable complex between two or more DNA-binding proteins in an ATP-dependent manner without itself being part of a final effector complex. The sequence is that of DNA mismatch repair protein MutL from Erwinia tasmaniensis (strain DSM 17950 / CFBP 7177 / CIP 109463 / NCPPB 4357 / Et1/99).